A 134-amino-acid chain; its full sequence is Profilin-2 (134 aa).

C13 and C118 are disulfide-bonded. An Involved in PIP2 interaction motif is present at residues 84 to 100 (AVIRGKKGSGGITIKKT). T114 carries the post-translational modification Phosphothreonine.

Belongs to the profilin family. Post-translationally, phosphorylated by MAP kinases.

The protein localises to the cytoplasm. The protein resides in the cytoskeleton. The protein is Profilin-2 of Olea europaea (Common olive).